A 337-amino-acid polypeptide reads, in one-letter code: Cytoskeleton protein RodZ (337 aa).

The Cytoplasmic portion of the chain corresponds to 1 to 111 (MNTEATHDQN…LGKRRKKRDG (111 aa)). Residues 19-71 (LRNAREQLGLSQQAVAERLCLKVSTVRDIEEDKAPADLASTFLRGYIRSYARL) enclose the HTH cro/C1-type domain. The H-T-H motif DNA-binding region spans 30–49 (QQAVAERLCLKVSTVRDIEE). The chain crosses the membrane as a helical; Signal-anchor for type II membrane protein span at residues 112–132 (WLMTFTWLVLFVVIGLSGAWW). Residues 133 to 337 (WQDHKAQQEE…TLNAEQSPAQ (205 aa)) lie on the Periplasmic side of the membrane. Positions 145-167 (TMADQSSAELSSNSEQGQSVPLN) are enriched in polar residues. The interval 145-236 (TMADQSSAEL…TAATTPDGAA (92 aa)) is disordered. Residues 168-207 (TSTTTDPATTSTPPASVDTTATNTQTPAVTAPAPAVDPQQ) are compositionally biased toward low complexity. The segment covering 208–218 (NAVVSPSQANV) has biased composition (polar residues). Low complexity predominate over residues 219–236 (DTAATPAPTAATTPDGAA).

The protein belongs to the RodZ family.

The protein resides in the cell inner membrane. Cytoskeletal protein that is involved in cell-shape control through regulation of the length of the long axis. The chain is Cytoskeleton protein RodZ from Escherichia coli O139:H28 (strain E24377A / ETEC).